The primary structure comprises 397 residues: Major outer membrane porin, serovar C (397 aa).

Positions 1–22 are cleaved as a signal peptide; that stretch reads MKKLLKSVLVFAALSSASSLQA.

This sequence belongs to the chlamydial porin (CP) (TC 1.B.2) family. As to quaternary structure, part of a disulfide cross-linked outer membrane complex (COMC) composed of the major outer membrane porin (MOMP), the small cysteine-rich protein (OmcA) and the large cysteine-rich periplasmic protein (OmcB).

The protein resides in the cell outer membrane. In elementary bodies (EBs, the infectious stage, which is able to survive outside the host cell) provides the structural integrity of the outer envelope through disulfide cross-links with the small cysteine-rich protein and the large cysteine-rich periplasmic protein. It has been described in publications as the Sarkosyl-insoluble COMC (Chlamydia outer membrane complex), and serves as the functional equivalent of peptidoglycan. In terms of biological role, permits diffusion of specific solutes through the outer membrane. The sequence is that of Major outer membrane porin, serovar C (ompA) from Chlamydia trachomatis.